Reading from the N-terminus, the 346-residue chain is D-alanine--D-alanine ligase (346 aa).

The ATP-grasp domain maps to 134-340 (KFLAESLGVK…IDYTYIHSIQ (207 aa)). Residue 161–212 (EYPVIIKPVRLGSSIGVSIVKSEAELDYALDVAFEFDNDVIVEPFIDGVKEF) coordinates ATP. Mg(2+) is bound by residues Asp284, Glu296, and Asn298.

Belongs to the D-alanine--D-alanine ligase family. Mg(2+) serves as cofactor. It depends on Mn(2+) as a cofactor.

Its subcellular location is the cytoplasm. It catalyses the reaction 2 D-alanine + ATP = D-alanyl-D-alanine + ADP + phosphate + H(+). Its pathway is cell wall biogenesis; peptidoglycan biosynthesis. Cell wall formation. The protein is D-alanine--D-alanine ligase of Sulfurovum sp. (strain NBC37-1).